Reading from the N-terminus, the 461-residue chain is MTAINRILIVDDEDNVRRMLSTAFALQGFETHCANNGRTALHLFADIHPDVVLMDIRMPEMDGIKALKEMRSHETRTPVILMTAYAEVETAVEALRCGAFDYVIKPFDLDELNLIVQRALQLQSMKKEIRHLHQALSTSWQWGHILTNSPAMMDICKDTAKIALSQASVLISGESGTGKELIARAIHYNSRRAKGPFIKVNCAALPESLLESELFGHEKGAFTGAQTLRQGLFERANEGTLLLDEIGEMPLVLQAKLLRILQEREFERIGGHQTIKVDIRIIAATNRDLQAMVKEGTFREDLFYRLNVIHLILPPLRDRREDISLLANHFLQKFSSENQRDIIDIDPMAMSLLTAWSWPGNIRELSNVIERAVVMNSGPIIFSEDLPPQIRQPVCNAGEVKTAPVGERNLKEEIKRVEKRIIMEVLEQQEGNRTRTALMLGISRRALMYKLQEYGIDPADV.

Positions 6 to 120 (RILIVDDEDN…ELNLIVQRAL (115 aa)) constitute a Response regulatory domain. Asp-55 is subject to 4-aspartylphosphate. Phosphohistidine is present on His-73. A Sigma-54 factor interaction domain is found at 145-374 (ILTNSPAMMD…LSNVIERAVV (230 aa)). ATP is bound by residues 173–180 (GESGTGKE) and 236–245 (ANEGTLLLDE). A DNA-binding region (H-T-H motif) is located at residues 433-452 (RTRTALMLGISRRALMYKLQ).

Post-translationally, phosphorylated by AtoS. Contains two phosphorylation sites, which are both involved in the transduction of the acetoacetate signal. Asp-55 is probably the primary phosphorylation site, but either both residues can be phosphorylated independently by AtoS or the phosphate group can be transferred between them. In terms of processing, the N-terminus is blocked.

It is found in the cytoplasm. Its function is as follows. Member of the two-component regulatory system AtoS/AtoC. In the presence of acetoacetate, AtoS/AtoC stimulates the expression of the atoDAEB operon, leading to short chain fatty acid catabolism and activation of the poly-(R)-3-hydroxybutyrate (cPHB) biosynthetic pathway. Also induces the operon in response to spermidine. Involved in the regulation of motility and chemotaxis, via transcriptional induction of the flagellar regulon. AtoC acts by binding directly to the promoter region of the target genes. In addition to its role as a transcriptional regulator, functions as a post-translational regulator that inhibits polyamine biosynthesis via regulation of ornithine decarboxylase (ODC). The chain is Regulatory protein AtoC (atoC) from Escherichia coli (strain K12).